We begin with the raw amino-acid sequence, 48 residues long: Sperm protamine R3 isoform 2 (48 aa).

The segment covering 1 to 29 (ARRRHSMKKKRKSVRRRKTRKNQRKRKNS) has biased composition (basic residues). The segment at 1 to 48 (ARRRHSMKKKRKSVRRRKTRKNQRKRKNSLGRSFKAHGFLKQPPRFRP) is disordered.

In terms of tissue distribution, testis.

It is found in the nucleus. The protein resides in the chromosome. In terms of biological role, protamines substitute for histones in the chromatin of sperm during the haploid phase of spermatogenesis. They compact sperm DNA into a highly condensed, stable and inactive complex. In Hydrolagus colliei (Spotted ratfish), this protein is Sperm protamine R3 isoform 2.